Here is a 354-residue protein sequence, read N- to C-terminus: MSKVQSITRESWILSTFPEWGSWLNEEIEQEQVAPGTFAMWWLGCTGIWLKSEGGTNVCVDFWCGTGKQSHGNPLMKTGHQMQRMAGVKKLQPNLRTTPFVLDPFAIRQIDAVLATHDHNDHIDVNVAAAVMQNCADNVPFIGPQTCVDLWVGWGVPKERCIVVKPGDVVKVKDIEIHALDAFDRTALITLPADQKAAGVLPDGMDVRAVNYLFKTPGGNLYHSGDSHYSNYYAKHGNEHQIDVALGSYGENPRGITDKMTSADILRMAESLNTKVVIPFHHDIWSNFQADPQEIRVLWEMKKDRLKYGFKPFIWQVGGKFTWPLDKDNFEYHYPRGFDDCFTIEPDLPFKSFL.

It belongs to the UlaG family. It depends on a divalent metal cation as a cofactor.

The protein localises to the cytoplasm. The catalysed reaction is L-ascorbate 6-phosphate + H2O = 3-dehydro-L-gulonate 6-phosphate. The protein operates within cofactor degradation; L-ascorbate degradation; D-xylulose 5-phosphate from L-ascorbate: step 1/4. Its function is as follows. Probably catalyzes the hydrolysis of L-ascorbate-6-P into 3-keto-L-gulonate-6-P. Is essential for L-ascorbate utilization under anaerobic conditions. This is Probable L-ascorbate-6-phosphate lactonase UlaG from Salmonella heidelberg (strain SL476).